A 207-amino-acid chain; its full sequence is Large ribosomal subunit protein uL4 (207 aa).

The tract at residues 49 to 78 (HAVKNRSAVSGGGRKPWRQKGTGRARQGSI) is disordered.

This sequence belongs to the universal ribosomal protein uL4 family. As to quaternary structure, part of the 50S ribosomal subunit.

One of the primary rRNA binding proteins, this protein initially binds near the 5'-end of the 23S rRNA. It is important during the early stages of 50S assembly. It makes multiple contacts with different domains of the 23S rRNA in the assembled 50S subunit and ribosome. In terms of biological role, forms part of the polypeptide exit tunnel. The polypeptide is Large ribosomal subunit protein uL4 (Streptococcus gordonii (strain Challis / ATCC 35105 / BCRC 15272 / CH1 / DL1 / V288)).